A 60-amino-acid chain; its full sequence is MKRFLFLLLTISLLVMVQIQTGVTSQNATSQSSPSASSNLSGGGFLFFVANAIIHLFYFS.

Residues 1–24 (MKRFLFLLLTISLLVMVQIQTGVT) form the signal peptide. N-linked (GlcNAc...) asparagine glycosylation occurs at N27. The GPI-anchor amidated serine moiety is linked to residue S35. Residues 36–60 (ASSNLSGGGFLFFVANAIIHLFYFS) constitute a propeptide, removed in mature form. N39 is a glycosylation site (N-linked (GlcNAc...) asparagine).

The protein resides in the cell membrane. Functionally, may play a role in carrying and orienting carbohydrate, as well as having a more specific role. The sequence is that of CAMPATH-1 antigen (CD52) from Macaca fascicularis (Crab-eating macaque).